Reading from the N-terminus, the 309-residue chain is Epidermal retinol dehydrogenase 2 (309 aa).

Residues Leu11 to Leu31 traverse the membrane as a helical segment. Leu44–Val68 serves as a coordination point for NADP(+). Position 177 (Ser177) interacts with substrate. Catalysis depends on Tyr190, which acts as the Proton acceptor. The chain crosses the membrane as a helical span at residues Leu270–Ala290.

The protein belongs to the short-chain dehydrogenases/reductases (SDR) family. In terms of tissue distribution, detected in adult lung. Detected at low levels in adult brain, heart, testis, placenta, cervix, pancreas, uterus, stomach, rectum, small intestine, colon, esophagus, thymus, skin, and skin keratinocyte. Expression is higher in psoriasis lesions relative to unaffected skin from psoriasis patients. Detected in fetal kidney, skin and lung.

It localises to the endoplasmic reticulum membrane. The enzyme catalyses all-trans-retinol--[retinol-binding protein] + NAD(+) = all-trans-retinal--[retinol-binding protein] + NADH + H(+). It functions in the pathway cofactor metabolism; retinol metabolism. Oxidoreductase with strong preference for NAD. Active in both the oxidative and reductive directions. Oxidizes all-trans-retinol in all-trans-retinaldehyde. No activity was detected with 11-cis-retinol or 11-cis-retinaldehyde as substrates with either NAD(+)/NADH or NADP(+)/NADPH. The protein is Epidermal retinol dehydrogenase 2 of Homo sapiens (Human).